We begin with the raw amino-acid sequence, 122 residues long: Large ribosomal subunit protein uL14 (122 aa).

It belongs to the universal ribosomal protein uL14 family. In terms of assembly, part of the 50S ribosomal subunit. Forms a cluster with proteins L3 and L19. In the 70S ribosome, L14 and L19 interact and together make contacts with the 16S rRNA in bridges B5 and B8.

In terms of biological role, binds to 23S rRNA. Forms part of two intersubunit bridges in the 70S ribosome. The protein is Large ribosomal subunit protein uL14 of Cupriavidus taiwanensis (strain DSM 17343 / BCRC 17206 / CCUG 44338 / CIP 107171 / LMG 19424 / R1) (Ralstonia taiwanensis (strain LMG 19424)).